The sequence spans 96 residues: Protein RnfH (96 aa).

The protein belongs to the UPF0125 (RnfH) family.

This Psychromonas ingrahamii (strain DSM 17664 / CCUG 51855 / 37) protein is Protein RnfH.